The following is a 111-amino-acid chain: Small ribosomal subunit protein uS17 (111 aa).

This sequence belongs to the universal ribosomal protein uS17 family. As to quaternary structure, part of the 30S ribosomal subunit.

One of the primary rRNA binding proteins, it binds specifically to the 5'-end of 16S ribosomal RNA. The sequence is that of Small ribosomal subunit protein uS17 from Methanocella arvoryzae (strain DSM 22066 / NBRC 105507 / MRE50).